A 158-amino-acid chain; its full sequence is Ribonuclease H (158 aa).

In terms of domain architecture, RNase H type-1 spans 1–147 (MKVTIYTDGA…CDVLATTAAD (147 aa)). Mg(2+) is bound by residues Asp8, Glu52, Asp74, and Asp139.

The protein belongs to the RNase H family. Monomer. Requires Mg(2+) as cofactor.

It is found in the cytoplasm. The catalysed reaction is Endonucleolytic cleavage to 5'-phosphomonoester.. Functionally, endonuclease that specifically degrades the RNA of RNA-DNA hybrids. This is Ribonuclease H from Lachnoclostridium phytofermentans (strain ATCC 700394 / DSM 18823 / ISDg) (Clostridium phytofermentans).